The primary structure comprises 112 residues: MKKVEAIIRPEKLEIVKKALSDAGYVGMTVSEVKGRGVQGGIVERYRGREYIVDLIPKVKIELVVKEEDVDNVIDIICENARTGNPGDGKIFVIPVERVVRVRTKEEGKEAL.

ADP is bound at residue T29. Residues T29 and V38 each contribute to the ATP site. 2-oxoglutarate is bound at residue 52-54 (IVD). ADP is bound by residues V64, 88-90 (DGK), and 101-103 (RVR). ATP is bound by residues V64, 86–90 (PGDGK), and 101–103 (RVR).

This sequence belongs to the P(II) protein family. As to quaternary structure, homotrimer. Interacts and forms a complex with Amt1.

The protein resides in the cytoplasm. Its activity is regulated as follows. Formation of the GlnK1/Amt1 complex is decreased in the presence of Mg-ATP or 2-oxoglutarate. The presence of both effectors abolishes the formation of the complex. In terms of biological role, involved in the regulation of nitrogen metabolism. Regulates the activity of its targets by protein-protein interaction in response to the nitrogen status of the cell. Regulates the activity of the ammonia channel Amt1 via direct interaction. The polypeptide is Nitrogen regulatory protein GlnK1 (Methanocaldococcus jannaschii (strain ATCC 43067 / DSM 2661 / JAL-1 / JCM 10045 / NBRC 100440) (Methanococcus jannaschii)).